Reading from the N-terminus, the 30-residue chain is Trypsin inhibitor 4 (30 aa).

3 disulfides stabilise this stretch: Cys-3–Cys-20, Cys-10–Cys-22, and Cys-16–Cys-29.

It belongs to the protease inhibitor I7 (squash-type serine protease inhibitor) family.

It is found in the secreted. Functionally, inhibits trypsin. The polypeptide is Trypsin inhibitor 4 (Cucumis sativus (Cucumber)).